The primary structure comprises 296 residues: Chronophin (296 aa).

D25 functions as the Nucleophile in the catalytic mechanism. Mg(2+)-binding residues include D25 and N27. Catalysis depends on N27, which acts as the Proton donor. Substrate is bound by residues 58–60 (SNN), H182, and K213. Residue D238 coordinates Mg(2+).

Belongs to the HAD-like hydrolase superfamily. In terms of assembly, homodimer. It depends on Mg(2+) as a cofactor. Detected in brain (at protein level).

The protein localises to the cytoplasm. It is found in the cytosol. The protein resides in the cytoskeleton. Its subcellular location is the cell projection. It localises to the ruffle membrane. The protein localises to the lamellipodium membrane. It is found in the cell membrane. It catalyses the reaction pyridoxal 5'-phosphate + H2O = pyridoxal + phosphate. The enzyme catalyses pyridoxine 5'-phosphate + H2O = pyridoxine + phosphate. The catalysed reaction is pyridoxamine + phosphate = pyridoxamine 5'-phosphate + H2O. It carries out the reaction O-phospho-L-seryl-[protein] + H2O = L-seryl-[protein] + phosphate. Its function is as follows. Functions as a pyridoxal phosphate (PLP) phosphatase, which also catalyzes the dephosphorylation of pyridoxine 5'-phosphate (PNP) and pyridoxamine 5'-phosphate (PMP), with order of substrate preference PLP &gt; PNP &gt; PMP and therefore plays a role in vitamin B6 metabolism. Also functions as a protein serine phosphatase that specifically dephosphorylates 'Ser-3' in proteins of the actin-depolymerizing factor (ADF)/cofilin family like CFL1 and DSTN. Thereby, regulates cofilin-dependent actin cytoskeleton reorganization, being required for normal progress through mitosis and normal cytokinesis. Does not dephosphorylate phosphothreonines in LIMK1. Does not dephosphorylate peptides containing phosphotyrosine. The chain is Chronophin from Bos taurus (Bovine).